A 949-amino-acid chain; its full sequence is ATPase 1, plasma membrane-type (949 aa).

Serine 2 carries the N-acetylserine modification. The Cytoplasmic segment spans residues 2 to 61; that stretch reads SGLEDIKNETVDLEKIPIEEVFQQLKCTREGLTTQEGEDRIVIFGPNKLEEKKESKILKF. The helical transmembrane segment at 62-81 threads the bilayer; the sequence is LGFMWNPLSWVMEAAALMAI. Residues 82–93 are Extracellular-facing; that stretch reads ALANGDNRPPDW. Residues 94 to 114 traverse the membrane as a helical segment; the sequence is QDFVGIICLLVINSTISFIEE. The Cytoplasmic portion of the chain corresponds to 115-243; the sequence is NNAGNAAAAL…GHFQKVLTSI (129 aa). The chain crosses the membrane as a helical span at residues 244-264; the sequence is GNFCICSIAIGIAIEIVVMYP. The Extracellular portion of the chain corresponds to 265–273; sequence IQHRKYRDG. A helical transmembrane segment spans residues 274-291; the sequence is IDNLLVLLIGGIPIAMPT. Topologically, residues 292–643 are cytoplasmic; it reads VLSVTMAIGS…TSRAIFQRMK (352 aa). Catalysis depends on aspartate 329, which acts as the 4-aspartylphosphate intermediate. Mg(2+) is bound by residues aspartate 588 and aspartate 592. Residues 644–665 form a helical membrane-spanning segment; the sequence is NYTIYAVSITIRIVFGFMLIAL. At 666-670 the chain is on the extracellular side; it reads IWEFD. The chain crosses the membrane as a helical span at residues 671–693; that stretch reads FSAFMVLIIAILNDGTIMTISKD. The Cytoplasmic portion of the chain corresponds to 694 to 709; it reads RVKPSPTPDSWKLKEI. The chain crosses the membrane as a helical span at residues 710-730; it reads FATGIVLGGYQAIMSVIFFWA. Residues 731 to 751 are Extracellular-facing; it reads AHKTDFFSDKFGVRSIRDNND. The chain crosses the membrane as a helical span at residues 752–772; the sequence is ELMGAVYLQVSIISQALIFVT. At 773–784 the chain is on the cytoplasmic side; it reads RSRSWSFVERPG. The helical transmembrane segment at 785–805 threads the bilayer; the sequence is ALLMIAFVIAQLVATLIAVYA. The Extracellular portion of the chain corresponds to 806–813; sequence DWTFAKVK. Residues 814-834 traverse the membrane as a helical segment; it reads GIGWGWAGVIWIYSIVTYFPQ. The Cytoplasmic segment spans residues 835-949; the sequence is DILKFAIRYI…IDTAGHHYTV (115 aa). Threonine 881 carries the post-translational modification Phosphothreonine. Phosphoserine occurs at positions 899 and 931. Residues 947-949 are interaction with 14-3-3 proteins; sequence YTV. Threonine 948 bears the Phosphothreonine mark.

The protein belongs to the cation transport ATPase (P-type) (TC 3.A.3) family. Type IIIA subfamily. As to quaternary structure, binds to 14-3-3 proteins. The binding is induced by phosphorylation of Thr-948. Binding to 14-3-3 proteins activates the H(+)-ATPase. Interacts with PPI1; this interaction promotes ATPase activity. Interacts with PSY1R. Part of a functional complex containing PSKR1, BAK1, CNGC17, and AHA. Interacts with CNGC17 and PSKR1. Triggered by SAUR9 via the phosphorylation of the C-terminal autoinhibitory domain. Interacts with AHA2. Binds to CBC1 and CBC2. Phosphorylated, probably by PHOT1 and PHOT2, at C-terminal Thr-948 in guard cells in response to blue light to induce stomatal opening. Expressed in guard cells, mesophyll cells, leaves and roots.

It localises to the cell membrane. It catalyses the reaction ATP + H2O + H(+)(in) = ADP + phosphate + 2 H(+)(out). Its activity is regulated as follows. Phosphorylation on Thr residues is repressed by tyrphostin 9, sphingosine, GW5074 and BML-265. By contrast, the fungal phytotoxin fusicoccin (FC) promotes phosphorylation of Thr-948 independently to BHP, thus leading to large stomatal opening. Its function is as follows. The plasma membrane H(+) ATPase of plants and fungi generates a proton gradient that drives the active transport of nutrients by H(+)-symport. The resulting external acidification and/or internal alkinization may mediate growth responses. Forms a functional cation-translocating unit with CNGC17 that is activated by PSKR1/BAK1 and possibly other BAK1/RLK complexes. Promotes stomatal opening in response to blue light. The chain is ATPase 1, plasma membrane-type from Arabidopsis thaliana (Mouse-ear cress).